A 406-amino-acid chain; its full sequence is Protein IWS1 homolog 2 (406 aa).

2 disordered regions span residues 1–28 (MQELDSSNDEWVKELEGENEESKFTGRR) and 41–89 (DEVE…SEEV). Over residues 10 to 24 (EWVKELEGENEESKF) the composition is skewed to basic and acidic residues. Residues 41 to 56 (DEVEEDLDDFTEPADD) are compositionally biased toward acidic residues. Positions 69 to 78 (KKDESGLEKT) are enriched in basic and acidic residues. The region spanning 201 to 284 (NLLKNWLEPL…NKWGRIIYNK (84 aa)) is the TFIIS N-terminal domain.

This sequence belongs to the IWS1 family.

The protein localises to the nucleus. Transcription factor involved in RNA polymerase II (RNAPII) transcription regulation. Involved in transcription elongation. May function at post-recruitment and elongation steps of transcription. This is Protein IWS1 homolog 2 from Arabidopsis thaliana (Mouse-ear cress).